We begin with the raw amino-acid sequence, 579 residues long: Arginine--tRNA ligase (579 aa).

A 'HIGH' region motif is present at residues 123–133; sequence PNLAKEMHVGH.

The protein belongs to the class-I aminoacyl-tRNA synthetase family. As to quaternary structure, monomer.

The protein localises to the cytoplasm. It catalyses the reaction tRNA(Arg) + L-arginine + ATP = L-arginyl-tRNA(Arg) + AMP + diphosphate. The protein is Arginine--tRNA ligase of Cellvibrio japonicus (strain Ueda107) (Pseudomonas fluorescens subsp. cellulosa).